We begin with the raw amino-acid sequence, 219 residues long: ATP synthase delta chain, chloroplastic (219 aa).

The N-terminal 33 residues, 1–33 (MLAAKSIAGPRAFKASAVRAAPKAGRRTVVVMA), are a transit peptide targeting the chloroplast.

This sequence belongs to the ATPase delta chain family. F-type ATPases have 2 components, F(1) - the catalytic core - and F(0) - the membrane proton channel. F(1) has five subunits: alpha(3), beta(3), gamma(1), delta(1), epsilon(1). F(0) has four main subunits: a(1), b(1), b'(1) and c(10-14). The alpha and beta chains form an alternating ring which encloses part of the gamma chain. F(1) is attached to F(0) by a central stalk formed by the gamma and epsilon chains, while a peripheral stalk is formed by the delta, b and b' chains.

The protein localises to the plastid. It localises to the chloroplast thylakoid membrane. Functionally, f(1)F(0) ATP synthase produces ATP from ADP in the presence of a proton or sodium gradient. F-type ATPases consist of two structural domains, F(1) containing the extramembraneous catalytic core and F(0) containing the membrane proton channel, linked together by a central stalk and a peripheral stalk. During catalysis, ATP synthesis in the catalytic domain of F(1) is coupled via a rotary mechanism of the central stalk subunits to proton translocation. In terms of biological role, this protein seems to be part of the stalk that links CF(0) to CF(1). It either transmits conformational changes from CF(0) into CF(1) or is implicated in proton conduction. This Chlamydomonas reinhardtii (Chlamydomonas smithii) protein is ATP synthase delta chain, chloroplastic.